Here is a 299-residue protein sequence, read N- to C-terminus: Lymphocyte antigen 6 complex locus protein G6f (299 aa).

The signal sequence occupies residues 1-19 (MAVLFLLLLFLCGLPQAET). An Ig-like V-type domain is found at 20–124 (DSIQAIYVVL…YRYQNWRVYD (105 aa)). The Extracellular segment spans residues 20-237 (DSIQAIYVVL…APSADWDVAW (218 aa)). The cysteines at positions 37 and 108 are disulfide-linked. N-linked (GlcNAc...) asparagine glycosylation is present at Asn90. A helical transmembrane segment spans residues 238–258 (ILTLLLTVGQGFTIVVLGVML). The Cytoplasmic portion of the chain corresponds to 259–299 (WRQRAQGAQHRNASFPQFKPEIQVYENIHLAHLSPPAPKTR). Tyr283 is modified (phosphotyrosine).

In terms of assembly, homodimer; disulfide-linked. Interacts with GRB2 and GRB7 in a phosphorylation-dependent manner. Post-translationally, N-glycosylated.

It is found in the cell membrane. Its function is as follows. May play a role in the downstream signal transduction pathways involving GRB2 and GRB7. This is Lymphocyte antigen 6 complex locus protein G6f (LY6G6F) from Bos taurus (Bovine).